Here is a 528-residue protein sequence, read N- to C-terminus: PC4 and SFRS1-interacting protein (528 aa).

The PWWP domain occupies 7–64 (PGDLIFAKMKGYPHWPARVDEVPDGAVKPPTNKLPIFFFGTHETAFLGPKDIFPYSEN). Residue Lys75 forms a Glycyl lysine isopeptide (Lys-Gly) (interchain with G-Cter in SUMO2) linkage. The tract at residues 86 to 347 (NNPKVKFSSQ…VEKKRETSMD (262 aa)) is disordered. Positions 92 to 106 (FSSQQVSTKQSNASS) are enriched in polar residues. Ser102, Ser105, and Ser106 each carry phosphoserine. Residues 113–135 (KETSVSKEDTDQEEKASNEDVTK) show a composition bias toward basic and acidic residues. A phosphothreonine mark is found at Thr115 and Thr122. The residue at position 129 (Ser129) is a Phosphoserine. Thr141 is modified (phosphothreonine). Over residues 144-153 (AARRGRKRKA) the composition is skewed to basic residues. The short motif at 146 to 156 (RRGRKRKAEKQ) is the Nuclear localization signal element. Residues Ser176 and Ser205 each carry the phosphoserine modification. The span at 212–260 (DEDKSKKKGPEEKPPKKQLKKEEEGQKEEEKPRKEPDKKEGKKEVESKR) shows a compositional bias: basic and acidic residues. Ser270 bears the Phosphoserine mark. The residue at position 271 (Thr271) is a Phosphothreonine. A phosphoserine mark is found at Ser272 and Ser274. The span at 285 to 300 (KRKGGRHFQAAHRRNM) shows a compositional bias: basic residues. The segment covering 303-347 (GQHEKEAADRKRKQEEQMETEQQTKDEGKKPEVKKVEKKRETSMD) has biased composition (basic and acidic residues). Coiled-coil stretches lie at residues 304-332 (QHEKEAADRKRKQEEQMETEQQTKDEGKK) and 369-393 (NRCIEALDELASLQVTMQQAQKHTE). The tract at residues 338 to 415 (VEKKRETSMD…VSQVIMEKST (78 aa)) is integrase-binding domain (IBD). Position 432 is a phosphoserine (Ser432). The residue at position 435 (Thr435) is a Phosphothreonine. Ser441 is subject to Phosphoserine. Residues 444 to 471 (EQRQHEEANKTKDQGKKGPNKKLEKEQT) show a composition bias toward basic and acidic residues. Residues 444–528 (EQRQHEEANK…VSLKESTLDN (85 aa)) form a disordered region. A compositionally biased stretch (polar residues) spans 472–492 (GTKSLNGGSDAQESNHPQHNG). A compositionally biased stretch (basic and acidic residues) spans 496–528 (EESKDSREAGSKTKTPGEEREAEVSLKESTLDN). Citrulline is present on Arg515. Phosphoserine is present on Ser520. Thr525 is modified (phosphothreonine).

The protein belongs to the HDGF family. Monomer. Interacts with IFRD1/PC4. Interacts (via IBD domain) with POGZ (via IBM motif) and CDCA7L (via IBM motifs). Interacts (via IBD domain) with KMT2A (via IBM motifs) with a moderate affinity whereas interacts with the KMT2A-MEN1 complex with a greater affinity; MEN1 enhances interaction of KMT2A with PSIP1. Interacts (via IBD domain) with IWS1 (via IBM motif), MED1 (via IBM motif) and DBF4 (via IBM motifs). Post-translationally, citrullinated by PADI4.

It localises to the nucleus. Its function is as follows. Transcriptional coactivator involved in neuroepithelial stem cell differentiation and neurogenesis. Involved in particular in lens epithelial cell gene regulation and stress responses. May play an important role in lens epithelial to fiber cell terminal differentiation. May play a protective role during stress-induced apoptosis. This Rattus norvegicus (Rat) protein is PC4 and SFRS1-interacting protein (Psip1).